Here is a 304-residue protein sequence, read N- to C-terminus: Aspartate carbamoyltransferase catalytic subunit (304 aa).

2 residues coordinate carbamoyl phosphate: R49 and T50. Residue K77 participates in L-aspartate binding. Residues R99, H127, and Q130 each contribute to the carbamoyl phosphate site. L-aspartate-binding residues include R160 and R211. A252 and P253 together coordinate carbamoyl phosphate.

The protein belongs to the aspartate/ornithine carbamoyltransferase superfamily. ATCase family. As to quaternary structure, heterododecamer (2C3:3R2) of six catalytic PyrB chains organized as two trimers (C3), and six regulatory PyrI chains organized as three dimers (R2).

It catalyses the reaction carbamoyl phosphate + L-aspartate = N-carbamoyl-L-aspartate + phosphate + H(+). It participates in pyrimidine metabolism; UMP biosynthesis via de novo pathway; (S)-dihydroorotate from bicarbonate: step 2/3. Catalyzes the condensation of carbamoyl phosphate and aspartate to form carbamoyl aspartate and inorganic phosphate, the committed step in the de novo pyrimidine nucleotide biosynthesis pathway. In Bacillus cytotoxicus (strain DSM 22905 / CIP 110041 / 391-98 / NVH 391-98), this protein is Aspartate carbamoyltransferase catalytic subunit.